Here is a 434-residue protein sequence, read N- to C-terminus: CC-adding tRNA nucleotidyltransferase (434 aa).

19-22 (GAVR) serves as a coordination point for CTP. Asp32 and Asp34 together coordinate Mg(2+). CTP-binding positions include 90–91 (RD), Asn95, 130–139 (DHLRSLRGVR), and Arg175.

Belongs to the tRNA nucleotidyltransferase/poly(A) polymerase family. It depends on Mg(2+) as a cofactor.

It catalyses the reaction a tRNA precursor + 2 CTP = a tRNA with a 3' CC end + 2 diphosphate. TRNA nucleotidyltransferase involved in the synthesis of the tRNA CCA terminus. Adds the two cytidine residues to tRNA. The chain is CC-adding tRNA nucleotidyltransferase from Thermus thermophilus (strain ATCC BAA-163 / DSM 7039 / HB27).